The chain runs to 288 residues: 4-hydroxybenzoate octaprenyltransferase (288 aa).

A run of 8 helical transmembrane segments spans residues I23–I43, T46–V66, I98–T118, L141–V161, L165–T185, L213–M233, N234–Q254, and A268–L288.

Belongs to the UbiA prenyltransferase family. Requires Mg(2+) as cofactor.

Its subcellular location is the cell inner membrane. It catalyses the reaction all-trans-octaprenyl diphosphate + 4-hydroxybenzoate = 4-hydroxy-3-(all-trans-octaprenyl)benzoate + diphosphate. The protein operates within cofactor biosynthesis; ubiquinone biosynthesis. Its function is as follows. Catalyzes the prenylation of para-hydroxybenzoate (PHB) with an all-trans polyprenyl group. Mediates the second step in the final reaction sequence of ubiquinone-8 (UQ-8) biosynthesis, which is the condensation of the polyisoprenoid side chain with PHB, generating the first membrane-bound Q intermediate 3-octaprenyl-4-hydroxybenzoate. This Yersinia enterocolitica serotype O:8 / biotype 1B (strain NCTC 13174 / 8081) protein is 4-hydroxybenzoate octaprenyltransferase.